The chain runs to 273 residues: 4-hydroxy-tetrahydrodipicolinate reductase (273 aa).

Residue 11–16 (GAGGRM) participates in NAD(+) binding. Arginine 37 provides a ligand contact to NADP(+). NAD(+) is bound by residues 100–102 (GTT) and 124–127 (AANY). The active-site Proton donor/acceptor is histidine 157. A (S)-2,3,4,5-tetrahydrodipicolinate-binding site is contributed by histidine 158. Lysine 161 functions as the Proton donor in the catalytic mechanism. Position 167–168 (167–168 (GT)) interacts with (S)-2,3,4,5-tetrahydrodipicolinate.

The protein belongs to the DapB family.

The protein resides in the cytoplasm. It carries out the reaction (S)-2,3,4,5-tetrahydrodipicolinate + NAD(+) + H2O = (2S,4S)-4-hydroxy-2,3,4,5-tetrahydrodipicolinate + NADH + H(+). The enzyme catalyses (S)-2,3,4,5-tetrahydrodipicolinate + NADP(+) + H2O = (2S,4S)-4-hydroxy-2,3,4,5-tetrahydrodipicolinate + NADPH + H(+). Its pathway is amino-acid biosynthesis; L-lysine biosynthesis via DAP pathway; (S)-tetrahydrodipicolinate from L-aspartate: step 4/4. Functionally, catalyzes the conversion of 4-hydroxy-tetrahydrodipicolinate (HTPA) to tetrahydrodipicolinate. The chain is 4-hydroxy-tetrahydrodipicolinate reductase from Acinetobacter baumannii (strain AB307-0294).